A 22-amino-acid polypeptide reads, in one-letter code: Proline-rich peptide (22 aa).

Positions 1 to 22 (FVDRNRIPRSNNGPKIPIISNP) are disordered.

It localises to the secreted. Functionally, antibacterial peptide active against Gram-positive bacterium M.luteus and Gram-negative bacterium E.coli. This chain is Proline-rich peptide, found in Calliphora vicina (Blue blowfly).